A 75-amino-acid chain; its full sequence is UPF0346 protein LJ_1103 (75 aa).

This sequence belongs to the UPF0346 family.

This is UPF0346 protein LJ_1103 from Lactobacillus johnsonii (strain CNCM I-12250 / La1 / NCC 533).